The sequence spans 406 residues: E3 ubiquitin-protein ligase RING1 (406 aa).

At threonine 24 the chain carries Phosphothreonine. The segment at 30-234 (MDGTEIAVSP…GGAGSEDSGD (205 aa)) is necessary for transcriptional repression. Serine 38 bears the Phosphoserine mark. The RING-type zinc-finger motif lies at 48 to 88 (CPICLDMLKNTMTTKECLHRFCSDCIVTALRSGNKECPTCR). A phosphoserine mark is found at serine 140, serine 187, and serine 190. Disordered stretches follow at residues 151-263 (HRAQ…GEIE) and 309-354 (QQQE…PSLE). The segment covering 175 to 187 (EPGEGEGDGEDVS) has biased composition (acidic residues). Residues 201–204 (KRPR) carry the Nuclear localization signal motif. The segment covering 214–228 (GTGGGAAGGACGGAG) has biased composition (gly residues). Position 215 is a phosphothreonine (threonine 215). Serine 229 and serine 232 each carry phosphoserine. Residues 230 to 406 (EDSGDRGGTL…LCYAPTKDPK (177 aa)) form a necessary for interaction with CBX2 region. A compositionally biased stretch (gly residues) spans 235–244 (RGGTLGGGTL). Pro residues predominate over residues 246–258 (PPSPPGAPSPPEP). Phosphoserine occurs at positions 248 and 254. A compositionally biased stretch (gly residues) spans 317-343 (GGPGGGASDTGGPDGGGGERGVAGGGE).

In terms of assembly, component of chromatin-associated Polycomb (PcG) complexes. Part of the E2F6.com-1 complex in G0 phase composed of E2F6, MGA, MAX, TFDP1, CBX3, BAT8, EUHMTASE1, RING1, RNF2/RING2 MBLR, L3MBTL2 and YAF2. Interacts with CBX2 and PCGF6. Component of a PRC1-like complex. Component of repressive BCOR complex containing Polycomb group subcomplex at least composed of RYBP, PCGF1, BCOR and RNF2/RING2. Interacts with PHC2, PCGF2, RNF2; CBX6, CBX7 and CBX8. Interacts with BMI1. Interacts with MN1. Interacts with USP26.

The protein localises to the nucleus speckle. The catalysed reaction is S-ubiquitinyl-[E2 ubiquitin-conjugating enzyme]-L-cysteine + [acceptor protein]-L-lysine = [E2 ubiquitin-conjugating enzyme]-L-cysteine + N(6)-ubiquitinyl-[acceptor protein]-L-lysine.. It participates in protein modification; protein ubiquitination. Constitutes one of the E3 ubiquitin-protein ligases that mediate monoubiquitination of 'Lys-119' of histone H2A, thereby playing a central role in histone code and gene regulation. H2A 'Lys-119' ubiquitination gives a specific tag for epigenetic transcriptional repression and participates in X chromosome inactivation of female mammals. Essential component of a Polycomb group (PcG) multiprotein PRC1-like complex, a complex class required to maintain the transcriptionally repressive state of many genes, including Hox genes, throughout development. PcG PRC1 complex acts via chromatin remodeling and modification of histones, rendering chromatin heritably changed in its expressibility. Compared to RNF2/RING2, it does not have the main E3 ubiquitin ligase activity on histone H2A, and it may rather act as a modulator of RNF2/RING2 activity. This is E3 ubiquitin-protein ligase RING1 from Mus musculus (Mouse).